The chain runs to 342 residues: tRNA N6-adenosine threonylcarbamoyltransferase (342 aa).

Residues His111 and His115 each contribute to the Fe cation site. Residues 134–138 (LVSGG), Asp167, Gly180, and Asn277 each bind substrate. Residue Asp305 coordinates Fe cation.

The protein belongs to the KAE1 / TsaD family. Fe(2+) serves as cofactor.

Its subcellular location is the cytoplasm. It catalyses the reaction L-threonylcarbamoyladenylate + adenosine(37) in tRNA = N(6)-L-threonylcarbamoyladenosine(37) in tRNA + AMP + H(+). Its function is as follows. Required for the formation of a threonylcarbamoyl group on adenosine at position 37 (t(6)A37) in tRNAs that read codons beginning with adenine. Is involved in the transfer of the threonylcarbamoyl moiety of threonylcarbamoyl-AMP (TC-AMP) to the N6 group of A37, together with TsaE and TsaB. TsaD likely plays a direct catalytic role in this reaction. The sequence is that of tRNA N6-adenosine threonylcarbamoyltransferase from Histophilus somni (strain 2336) (Haemophilus somnus).